A 329-amino-acid polypeptide reads, in one-letter code: Thioredoxin-like fold domain-containing protein MRL7L homolog, chloroplastic (329 aa).

Residues 1 to 46 constitute a chloroplast transit peptide; the sequence is MALQSCCSSSASVPATCSALCLAEATRAASLFVRPRAAARRLVLAR. The interval 58–91 is disordered; the sequence is AVQLVLGGRARDDGSESESSDDEDDDEPMQMTDE. A compositionally biased stretch (acidic residues) spans 72–85; it reads SESESSDDEDDDEP.

The protein localises to the plastid. It is found in the chloroplast stroma. In terms of biological role, plays an essential role in early steps of chloroplast development. Involved in the regulation of plastid gene expression. Required for the proper function of the plastid transcriptional machinery and protein accumulation in thylakoid membranes. May function as molecular chaperone to ensure proper organization of the nucleoids in chloroplasts. This is Thioredoxin-like fold domain-containing protein MRL7L homolog, chloroplastic from Oryza sativa subsp. japonica (Rice).